The chain runs to 219 residues: 2,5-diamino-6-ribosylamino-4(3H)-pyrimidinone 5'-phosphate reductase (219 aa).

Residues Thr52, Asp56, 87-90 (SRCR), Val134, and 156-159 (GGTL) each bind NADP(+).

The protein belongs to the HTP reductase family. In terms of assembly, homodimer.

The catalysed reaction is 2,5-diamino-6-(1-D-ribitylamino)pyrimidin-4(3H)-one 5'-phosphate + NADP(+) = 2,5-diamino-6-(1-D-ribosylamino)pyrimidin-4(3H)-one 5'-phosphate + NADPH + H(+). It carries out the reaction 2,5-diamino-6-(1-D-ribitylamino)pyrimidin-4(3H)-one 5'-phosphate + NAD(+) = 2,5-diamino-6-(1-D-ribosylamino)pyrimidin-4(3H)-one 5'-phosphate + NADH + H(+). The protein operates within cofactor biosynthesis; riboflavin biosynthesis. Functionally, catalyzes an early step in riboflavin biosynthesis, the NADPH-dependent reduction of the ribose side chain of 2,5-diamino-6-ribosylamino-4(3H)-pyrimidinone 5'-phosphate, yielding 2,5-diamino-6-ribitylamino-4(3H)-pyrimidinone 5'-phosphate. The chain is 2,5-diamino-6-ribosylamino-4(3H)-pyrimidinone 5'-phosphate reductase from Archaeoglobus fulgidus (strain ATCC 49558 / DSM 4304 / JCM 9628 / NBRC 100126 / VC-16).